Consider the following 657-residue polypeptide: UvrABC system protein B (657 aa).

The Helicase ATP-binding domain occupies 25 to 182 (KSIKQGNEFQ…KKLIEIQYER (158 aa)). 38–45 (GVTGSGKT) contributes to the ATP binding site. The Beta-hairpin motif lies at 91 to 114 (YYDYYQPEAYVPQTDTFIEKDASI). Residues 429–595 (QIDDLYTEIQ…TINKEVRELI (167 aa)) enclose the Helicase C-terminal domain. The UVR domain maps to 621 to 656 (KKLIKEYTDEMKLAAKNLQFERAAQLRDKIEELKGK).

It belongs to the UvrB family. Forms a heterotetramer with UvrA during the search for lesions. Interacts with UvrC in an incision complex.

The protein localises to the cytoplasm. Its function is as follows. The UvrABC repair system catalyzes the recognition and processing of DNA lesions. A damage recognition complex composed of 2 UvrA and 2 UvrB subunits scans DNA for abnormalities. Upon binding of the UvrA(2)B(2) complex to a putative damaged site, the DNA wraps around one UvrB monomer. DNA wrap is dependent on ATP binding by UvrB and probably causes local melting of the DNA helix, facilitating insertion of UvrB beta-hairpin between the DNA strands. Then UvrB probes one DNA strand for the presence of a lesion. If a lesion is found the UvrA subunits dissociate and the UvrB-DNA preincision complex is formed. This complex is subsequently bound by UvrC and the second UvrB is released. If no lesion is found, the DNA wraps around the other UvrB subunit that will check the other stand for damage. The protein is UvrABC system protein B of Clostridium botulinum (strain Eklund 17B / Type B).